Here is a 209-residue protein sequence, read N- to C-terminus: Large ribosomal subunit protein uL3 (209 aa).

Residues 119–145 (AIKRHGQSRGPMSHGSHFHRAPGSVGM) form a disordered region.

The protein belongs to the universal ribosomal protein uL3 family. Part of the 50S ribosomal subunit. Forms a cluster with proteins L14 and L19.

Functionally, one of the primary rRNA binding proteins, it binds directly near the 3'-end of the 23S rRNA, where it nucleates assembly of the 50S subunit. The chain is Large ribosomal subunit protein uL3 from Staphylococcus aureus (strain COL).